Consider the following 120-residue polypeptide: Large ribosomal subunit protein uL18 (120 aa).

It belongs to the universal ribosomal protein uL18 family. Part of the 50S ribosomal subunit; part of the 5S rRNA/L5/L18/L25 subcomplex. Contacts the 5S and 23S rRNAs.

This is one of the proteins that bind and probably mediate the attachment of the 5S RNA into the large ribosomal subunit, where it forms part of the central protuberance. The protein is Large ribosomal subunit protein uL18 of Maricaulis maris (strain MCS10) (Caulobacter maris).